A 215-amino-acid polypeptide reads, in one-letter code: Histone H1.1 (215 aa).

The disordered stretch occupies residues 1 to 43 (MSETVPPAPAASAAPEKPLAGKKAKKPAKAAAASKKKPAGPSV). Ser-2 bears the N-acetylserine mark. Ser-2 and Ser-12 each carry phosphoserine. The residue at position 17 (Lys-17) is an N6-acetyllysine. Residues 20–38 (AGKKAKKPAKAAAASKKKP) are compositionally biased toward basic residues. Lys-37 is modified (N6-(beta-hydroxybutyryl)lysine). Positions 39–112 (AGPSVSELIV…GASGSFKLNK (74 aa)) constitute an H15 domain. Ser-44 is modified (phosphoserine). At Lys-55 the chain carries N6-(beta-hydroxybutyryl)lysine. Citrulline is present on Arg-57. The residue at position 67 (Lys-67) is an N6-(beta-hydroxybutyryl)lysine. The residue at position 78 (Lys-78) is an N6-acetyllysine. N6-(beta-hydroxybutyryl)lysine is present on Lys-88. Lys-93 carries the post-translational modification N6-(beta-hydroxybutyryl)lysine; alternate. Position 93 is an N6-acetyllysine; alternate (Lys-93). Residues 94–215 (GTLVQTKGTG…KPKKAAPKKK (122 aa)) are disordered. Phosphoserine is present on Ser-107. Lys-109 bears the N6-(beta-hydroxybutyryl)lysine mark. Low complexity predominate over residues 122-147 (GASKVATKTKATGASKKLKKATGASK). N6-acetyllysine is present on Lys-125. Basic residues-rich tracts occupy residues 148–181 (KSVK…KKVA) and 188–215 (KAVK…PKKK). Position 204 is a phosphothreonine (Thr-204).

This sequence belongs to the histone H1/H5 family. Interacts with DFFB. Post-translationally, H1 histones are progressively phosphorylated during the cell cycle, becoming maximally phosphorylated during late G2 phase and M phase, and being dephosphorylated sharply thereafter. In terms of processing, citrullination at Arg-57 (H1R54ci) by PADI4 takes place within the DNA-binding site of H1 and results in its displacement from chromatin and global chromatin decondensation, thereby promoting pluripotency and stem cell maintenance.

It is found in the nucleus. It localises to the chromosome. In terms of biological role, histone H1 protein binds to linker DNA between nucleosomes forming the macromolecular structure known as the chromatin fiber. Histones H1 are necessary for the condensation of nucleosome chains into higher-order structured fibers. Also acts as a regulator of individual gene transcription through chromatin remodeling, nucleosome spacing and DNA methylation. This chain is Histone H1.1, found in Homo sapiens (Human).